The primary structure comprises 556 residues: Optineurin (556 aa).

A disordered region spans residues M1–S33. Positions E11–N22 are enriched in basic and acidic residues. A coiled-coil region spans residues E38–A164. The LIR motif lies at D168–I173. The stretch at V219–D487 forms a coiled coil. Residues E245–I274 are disordered. Positions E253–N265 are enriched in polar residues. A UBAN motif is present at residues D453 to R458. The tract at residues M496–P524 is disordered. The CCHC NOA-type zinc-finger motif lies at Q526–N556. The Zn(2+) site is built by C534, C537, H550, and C554.

In terms of assembly, binds to linear ubiquitin chains. Interacts with LC3 family members. In terms of tissue distribution, expressed in erythrocytes, skeletal muscle, heart, spleen and brain. Weakly expressed in lung and liver (at protein level).

It is found in the cytoplasm. Its subcellular location is the perinuclear region. The protein resides in the golgi apparatus. It localises to the trans-Golgi network. The protein localises to the cytoplasmic vesicle. It is found in the recycling endosome. Its subcellular location is the autophagosome. In terms of biological role, probably part of the TNF-alpha signaling pathway that can shift the equilibrium toward induction of cell death. May act by regulating membrane trafficking and cellular morphogenesis. May act as autophagy receptor that interacts directly with both the cargo to become degraded and an autophagy modifier of the MAP1 LC3 family. The protein is Optineurin (OPTN) of Gallus gallus (Chicken).